We begin with the raw amino-acid sequence, 393 residues long: Probable acetyl-CoA acetyltransferase (393 aa).

Thr-2 is a propeptide (removed; alternate). Cys-88 acts as the Acyl-thioester intermediate in catalysis. Active-site proton acceptor residues include His-349 and Cys-379.

Belongs to the thiolase-like superfamily. Thiolase family.

The enzyme catalyses 2 acetyl-CoA = acetoacetyl-CoA + CoA. This is Probable acetyl-CoA acetyltransferase (fadA4) from Mycobacterium tuberculosis (strain ATCC 25618 / H37Rv).